A 308-amino-acid polypeptide reads, in one-letter code: NADH-cytochrome b5 reductase 1 (308 aa).

The helical transmembrane segment at 29 to 49 (VASSPAFLVAAAAIVIAAAFY) threads the bilayer. Residues 64–167 (SIWKEFPLQK…KGPKGNFKYT (104 aa)) form the FAD-binding FR-type domain. FAD-binding positions include 147 to 162 (ASLK…GPKG) and 173 to 205 (HLGM…NITL).

The protein belongs to the flavoprotein pyridine nucleotide cytochrome reductase family. As to quaternary structure, monomer. Component of the 2-(3-amino-3-carboxypropyl)histidine synthase complex composed of DPH1, DPH2, DPH3 and a NADH-dependent reductase, predominantly MCR1.1. Requires FAD as cofactor.

Its subcellular location is the mitochondrion outer membrane. It carries out the reaction 2 Fe(III)-[cytochrome b5] + NADH = 2 Fe(II)-[cytochrome b5] + NAD(+) + H(+). The enzyme catalyses 2 Fe(3+)-[Dph3] + NADH = 2 Fe(2+)-[Dph3] + NAD(+) + H(+). It functions in the pathway protein modification; peptidyl-diphthamide biosynthesis. In terms of biological role, NADH-dependent reductase for DPH3 and cytochrome b5. Required for the first step of diphthamide biosynthesis, a post-translational modification of histidine which occurs in elongation factor 2. DPH1 and DPH2 transfer a 3-amino-3-carboxypropyl (ACP) group from S-adenosyl-L-methionine (SAM) to a histidine residue, the reaction is assisted by a reduction system comprising DPH3 and a NADH-dependent reductase, predominantly MCR1.1. By reducing DPH3, also involved in the formation of the tRNA wobble base modification mcm5s 2U (5-methoxycarbonylmethyl-2-thiouridine), mediated by the elongator complex. The cytochrome b5/NADH cytochrome b5 reductase electron transfer system supports the catalytic activity of several sterol biosynthetic enzymes. The chain is NADH-cytochrome b5 reductase 1 (MCR1.1) from Laccaria bicolor (strain S238N-H82 / ATCC MYA-4686) (Bicoloured deceiver).